An 87-amino-acid chain; its full sequence is Translation initiation factor IF-1 2 (87 aa).

Residues 1-72 form the S1-like domain; sequence MAADDHIEME…TKGRIARRTT (72 aa). The interval 65–87 is disordered; that stretch reads GRIARRTTTPSGGPRPARSGNRR.

This sequence belongs to the IF-1 family. In terms of assembly, component of the 30S ribosomal translation pre-initiation complex which assembles on the 30S ribosome in the order IF-2 and IF-3, IF-1 and N-formylmethionyl-tRNA(fMet); mRNA recruitment can occur at any time during PIC assembly.

The protein localises to the cytoplasm. In terms of biological role, one of the essential components for the initiation of protein synthesis. Stabilizes the binding of IF-2 and IF-3 on the 30S subunit to which N-formylmethionyl-tRNA(fMet) subsequently binds. Helps modulate mRNA selection, yielding the 30S pre-initiation complex (PIC). Upon addition of the 50S ribosomal subunit IF-1, IF-2 and IF-3 are released leaving the mature 70S translation initiation complex. The protein is Translation initiation factor IF-1 2 of Nitratidesulfovibrio vulgaris (strain ATCC 29579 / DSM 644 / CCUG 34227 / NCIMB 8303 / VKM B-1760 / Hildenborough) (Desulfovibrio vulgaris).